The sequence spans 661 residues: mRNA 3'-end-processing protein RNA14 (661 aa).

The tract at residues 1 to 37 is disordered; that stretch reads MSGNETPDAGTVKSVSPSSGGSSLPARPTLRERDPND. Residues 14-23 are compositionally biased toward low complexity; that stretch reads SVSPSSGGSS. HAT repeat units follow at residues 67–99, 101–135, 149–181, 192–225, 262–298, 307–339, and 513–548; these read QQVA…WELE, EESG…YVRR, TVLK…FLEQ, SRVE…WEQE, SLPT…WELD, VLRQ…FVDE, and YNLD…FFEK.

It is found in the nucleus. Its subcellular location is the cytoplasm. Functionally, component of the cleavage factor IA (CFIA) complex, which is involved in the endonucleolytic cleavage during polyadenylation-dependent pre-mRNA 3'-end formation. The protein is mRNA 3'-end-processing protein RNA14 (RNA14) of Eremothecium gossypii (strain ATCC 10895 / CBS 109.51 / FGSC 9923 / NRRL Y-1056) (Yeast).